A 167-amino-acid chain; its full sequence is Thioredoxin M-type, chloroplastic (167 aa).

The N-terminal 53 residues, 1–53, are a transit peptide targeting the chloroplast; sequence MAMETCFRAWALHAPAGSKDRLLVGNLVLPSKRALAPLSVGRVATRRPRHVCQ. The 112-residue stretch at 54-165 folds into the Thioredoxin domain; sequence SKNAVDEVVV…LTTLIDKYIG (112 aa). The cysteines at positions 89 and 92 are disulfide-linked.

The protein belongs to the thioredoxin family. Plant M-type subfamily. As to quaternary structure, forms a complex with heterodimeric ferredoxin-thioredoxin reductase (FTR) and ferredoxin.

It localises to the plastid. Its subcellular location is the chloroplast. Functionally, participates in various redox reactions through the reversible oxidation of the active center dithiol to a disulfide. The M form is known to activate NADP-malate dehydrogenase. This Zea mays (Maize) protein is Thioredoxin M-type, chloroplastic (TRM1).